Consider the following 239-residue polypeptide: Lactate utilization protein A (239 aa).

Belongs to the LutA/YkgE family.

Is involved in L-lactate degradation and allows cells to grow with lactate as the sole carbon source. This chain is Lactate utilization protein A, found in Geobacillus thermodenitrificans (strain NG80-2).